The sequence spans 177 residues: UPF0114 protein HPAG1_0183 (177 aa).

4 helical membrane passes run 15-35 (WLLAPLCIAMSLVLVVLGYVF), 54-74 (LVLSALGLVDLLFMAGLVLMV), 102-122 (FNALKLKVSLSIVAISAIFLL), and 145-165 (PIFWQVVIHLVFVCSALLAAV).

It belongs to the UPF0114 family.

The protein localises to the cell membrane. This chain is UPF0114 protein HPAG1_0183, found in Helicobacter pylori (strain HPAG1).